The primary structure comprises 158 residues: Cyclic pyranopterin monophosphate synthase (158 aa).

Substrate-binding positions include 73 to 75 (LCH) and 110 to 111 (ME). Asp125 is an active-site residue.

It belongs to the MoaC family. In terms of assembly, homohexamer; trimer of dimers.

It catalyses the reaction (8S)-3',8-cyclo-7,8-dihydroguanosine 5'-triphosphate = cyclic pyranopterin phosphate + diphosphate. It participates in cofactor biosynthesis; molybdopterin biosynthesis. Functionally, catalyzes the conversion of (8S)-3',8-cyclo-7,8-dihydroguanosine 5'-triphosphate to cyclic pyranopterin monophosphate (cPMP). This Ectopseudomonas mendocina (strain ymp) (Pseudomonas mendocina) protein is Cyclic pyranopterin monophosphate synthase.